A 70-amino-acid polypeptide reads, in one-letter code: Large ribosomal subunit protein bL31 (70 aa).

Residues Cys-16, Cys-18, Cys-37, and Cys-40 each coordinate Zn(2+).

Belongs to the bacterial ribosomal protein bL31 family. Type A subfamily. Part of the 50S ribosomal subunit. Zn(2+) serves as cofactor.

Its function is as follows. Binds the 23S rRNA. This Desulfovibrio desulfuricans (strain ATCC 27774 / DSM 6949 / MB) protein is Large ribosomal subunit protein bL31.